The following is a 403-amino-acid chain: CCA-adding enzyme (403 aa).

Positions 32 and 35 each coordinate ATP. G32 and R35 together coordinate CTP. Residues D45 and D47 each contribute to the Mg(2+) site. Residues R116, D159, R162, R165, and R168 each coordinate ATP. R116, D159, R162, R165, and R168 together coordinate CTP.

This sequence belongs to the tRNA nucleotidyltransferase/poly(A) polymerase family. Bacterial CCA-adding enzyme type 3 subfamily. Homodimer. Mg(2+) is required as a cofactor.

The enzyme catalyses a tRNA precursor + 2 CTP + ATP = a tRNA with a 3' CCA end + 3 diphosphate. It carries out the reaction a tRNA with a 3' CCA end + 2 CTP + ATP = a tRNA with a 3' CCACCA end + 3 diphosphate. Functionally, catalyzes the addition and repair of the essential 3'-terminal CCA sequence in tRNAs without using a nucleic acid template. Adds these three nucleotides in the order of C, C, and A to the tRNA nucleotide-73, using CTP and ATP as substrates and producing inorganic pyrophosphate. tRNA 3'-terminal CCA addition is required both for tRNA processing and repair. Also involved in tRNA surveillance by mediating tandem CCA addition to generate a CCACCA at the 3' terminus of unstable tRNAs. While stable tRNAs receive only 3'-terminal CCA, unstable tRNAs are marked with CCACCA and rapidly degraded. The polypeptide is CCA-adding enzyme (Limosilactobacillus reuteri (strain DSM 20016) (Lactobacillus reuteri)).